The chain runs to 515 residues: 2-isopropylmalate synthase (515 aa).

In terms of domain architecture, Pyruvate carboxyltransferase spans 4 to 266 (IKIFDTTLRD…ETGLILKETK (263 aa)). Positions 13, 201, 203, and 237 each coordinate Mn(2+). A regulatory domain region spans residues 392–515 (KLIQFGVSYD…ANLTRLVYES (124 aa)).

Belongs to the alpha-IPM synthase/homocitrate synthase family. LeuA type 1 subfamily. As to quaternary structure, homodimer. The cofactor is Mn(2+).

It localises to the cytoplasm. It catalyses the reaction 3-methyl-2-oxobutanoate + acetyl-CoA + H2O = (2S)-2-isopropylmalate + CoA + H(+). Its pathway is amino-acid biosynthesis; L-leucine biosynthesis; L-leucine from 3-methyl-2-oxobutanoate: step 1/4. Its function is as follows. Catalyzes the condensation of the acetyl group of acetyl-CoA with 3-methyl-2-oxobutanoate (2-ketoisovalerate) to form 3-carboxy-3-hydroxy-4-methylpentanoate (2-isopropylmalate). In Oceanobacillus iheyensis (strain DSM 14371 / CIP 107618 / JCM 11309 / KCTC 3954 / HTE831), this protein is 2-isopropylmalate synthase.